A 124-amino-acid polypeptide reads, in one-letter code: Iron-sulfur cluster insertion protein ErpA (124 aa).

Iron-sulfur cluster contacts are provided by cysteine 52, cysteine 116, and cysteine 118.

Belongs to the HesB/IscA family. As to quaternary structure, homodimer. It depends on iron-sulfur cluster as a cofactor.

Functionally, required for insertion of 4Fe-4S clusters for at least IspG. The chain is Iron-sulfur cluster insertion protein ErpA from Acidithiobacillus ferrooxidans (strain ATCC 23270 / DSM 14882 / CIP 104768 / NCIMB 8455) (Ferrobacillus ferrooxidans (strain ATCC 23270)).